A 98-amino-acid polypeptide reads, in one-letter code: MLANSREELVEVFDALDADLDRLDEVSFEVLSTPERLRSLERLECLARRLPAAQHTLINQLDTQASEEELGGTLCCALANRLRITKPEAGRRSAEAKP.

This sequence belongs to the Rv1128c/1148c/1588c/1702c/1945/3466 family.

This is an uncharacterized protein from Mycobacterium tuberculosis (strain ATCC 25618 / H37Rv).